Reading from the N-terminus, the 261-residue chain is 3-methyl-2-oxobutanoate hydroxymethyltransferase (261 aa).

Mg(2+)-binding residues include aspartate 42 and aspartate 81. Residues aspartate 42 to serine 43, aspartate 81, and lysine 110 each bind 3-methyl-2-oxobutanoate. Position 112 (glutamate 112) interacts with Mg(2+). The active-site Proton acceptor is glutamate 179.

It belongs to the PanB family. Homodecamer; pentamer of dimers. Mg(2+) serves as cofactor.

It localises to the cytoplasm. The enzyme catalyses 3-methyl-2-oxobutanoate + (6R)-5,10-methylene-5,6,7,8-tetrahydrofolate + H2O = 2-dehydropantoate + (6S)-5,6,7,8-tetrahydrofolate. It participates in cofactor biosynthesis; (R)-pantothenate biosynthesis; (R)-pantoate from 3-methyl-2-oxobutanoate: step 1/2. In terms of biological role, catalyzes the reversible reaction in which hydroxymethyl group from 5,10-methylenetetrahydrofolate is transferred onto alpha-ketoisovalerate to form ketopantoate. The protein is 3-methyl-2-oxobutanoate hydroxymethyltransferase of Thermus thermophilus (strain ATCC 27634 / DSM 579 / HB8).